The following is a 209-amino-acid chain: dITP/XTP pyrophosphatase (209 aa).

A substrate-binding site is contributed by 7–12 (SSHGYK). Asp70 functions as the Proton acceptor in the catalytic mechanism. Asp70 is a Mg(2+) binding site. Substrate-binding positions include Ser71, 154 to 157 (FGYD), Lys177, and 182 to 183 (HR).

The protein belongs to the HAM1 NTPase family. As to quaternary structure, homodimer. It depends on Mg(2+) as a cofactor.

The enzyme catalyses XTP + H2O = XMP + diphosphate + H(+). It carries out the reaction dITP + H2O = dIMP + diphosphate + H(+). The catalysed reaction is ITP + H2O = IMP + diphosphate + H(+). In terms of biological role, pyrophosphatase that catalyzes the hydrolysis of nucleoside triphosphates to their monophosphate derivatives, with a high preference for the non-canonical purine nucleotides XTP (xanthosine triphosphate), dITP (deoxyinosine triphosphate) and ITP. Seems to function as a house-cleaning enzyme that removes non-canonical purine nucleotides from the nucleotide pool, thus preventing their incorporation into DNA/RNA and avoiding chromosomal lesions. In Chlamydia trachomatis serovar A (strain ATCC VR-571B / DSM 19440 / HAR-13), this protein is dITP/XTP pyrophosphatase.